We begin with the raw amino-acid sequence, 1386 residues long: Rab3 GTPase-activating protein non-catalytic subunit (1386 aa).

Residues 31 to 69 (GALRRDPSKTSNWEDDSWGAWEETEPQEPEEEGNTSKTQ) form a disordered region. A Phosphoserine modification is found at serine 38. The segment covering 43–63 (WEDDSWGAWEETEPQEPEEEG) has biased composition (acidic residues). Phosphoserine is present on serine 448. Position 899 is a phosphothreonine (threonine 899). Residue serine 914 is modified to Phosphoserine. The segment covering 959-973 (REKDVENPDEPREGI) has biased composition (basic and acidic residues). The interval 959 to 982 (REKDVENPDEPREGIARSPPEVSE) is disordered. The residue at position 976 (serine 976) is a Phosphoserine.

The protein belongs to the Rab3-GAP regulatory subunit family. As to quaternary structure, the Rab3 GTPase-activating complex is a heterodimer composed of Rab3gap1 and Rab3gap2. The Rab3 GTPase-activating complex interacts with DMXL2. Interacts with LMAN1.

The protein localises to the cytoplasm. Its subcellular location is the endoplasmic reticulum. In terms of biological role, regulatory subunit of the Rab3 GTPase-activating (Rab3GAP) complex composed of RAB3GAP1 and RAB3GAP2, which has GTPase-activating protein (GAP) activity towards various Rab3 subfamily members (RAB3A, RAB3B, RAB3C and RAB3D), RAB5A and RAB43, and guanine nucleotide exchange factor (GEF) activity towards RAB18. As part of the Rab3GAP complex, acts as a GAP for Rab3 proteins by converting active RAB3-GTP to the inactive form RAB3-GDP. Rab3 proteins are involved in regulated exocytosis of neurotransmitters and hormones. The Rab3GAP complex acts as a GEF for RAB18 by promoting the conversion of inactive RAB18-GDP to the active form RAB18-GTP. Recruits and stabilizes RAB18 at the cis-Golgi membrane in fibroblasts where RAB18 is most likely activated. Also involved in RAB18 recruitment at the endoplasmic reticulum (ER) membrane where it maintains proper ER structure. Required for normal eye and brain development. May participate in neurodevelopmental processes such as proliferation, migration and differentiation before synapse formation, and non-synaptic vesicular release of neurotransmitters. The protein is Rab3 GTPase-activating protein non-catalytic subunit of Rattus norvegicus (Rat).